Reading from the N-terminus, the 38-residue chain is Photosystem II reaction center protein X 1 (38 aa).

The chain crosses the membrane as a helical span at residues 8 to 28 (FLWSLLYGAVVLGLLFGAIVF).

The protein belongs to the PsbX family. Type 1 subfamily. PSII is composed of 1 copy each of membrane proteins PsbA, PsbB, PsbC, PsbD, PsbE, PsbF, PsbH, PsbI, PsbJ, PsbK, PsbL, PsbM, PsbT, PsbX, PsbY, PsbZ, Psb30/Ycf12, peripheral proteins PsbO, CyanoQ (PsbQ), PsbU, PsbV and a large number of cofactors. It forms dimeric complexes.

It is found in the cellular thylakoid membrane. In terms of biological role, involved in the binding and/or turnover of quinones at the Q(B) site of photosystem II (PSII). PSII is a light-driven water plastoquinone oxidoreductase, using light energy to abstract electrons from H(2)O, generating a proton gradient subsequently used for ATP formation. The protein is Photosystem II reaction center protein X 1 of Synechococcus sp. (strain JA-3-3Ab) (Cyanobacteria bacterium Yellowstone A-Prime).